The chain runs to 76 residues: Beta-defensin 121 (76 aa).

Positions 1–15 (MKLLLLLLTVTLLLA) are cleaved as a signal peptide. 3 disulfide bridges follow: C23-C50, C30-C44, and C34-C51.

Belongs to the beta-defensin family.

The protein resides in the secreted. In terms of biological role, has antibacterial activity. This Pan troglodytes (Chimpanzee) protein is Beta-defensin 121 (DEFB121).